The following is a 431-amino-acid chain: Glutamate--tRNA ligase 1 (431 aa).

The short motif at 6–16 is the 'HIGH' region element; that stretch reads PSPTGDMHIGN. The short motif at 235-239 is the 'KMSKS' region element; it reads KMSKR. Position 238 (Lys-238) interacts with ATP.

It belongs to the class-I aminoacyl-tRNA synthetase family. Glutamate--tRNA ligase type 1 subfamily. Monomer.

The protein localises to the cytoplasm. The catalysed reaction is tRNA(Glu) + L-glutamate + ATP = L-glutamyl-tRNA(Glu) + AMP + diphosphate. Its function is as follows. Catalyzes the attachment of glutamate to tRNA(Glu) in a two-step reaction: glutamate is first activated by ATP to form Glu-AMP and then transferred to the acceptor end of tRNA(Glu). The sequence is that of Glutamate--tRNA ligase 1 from Campylobacter jejuni subsp. jejuni serotype O:23/36 (strain 81-176).